A 906-amino-acid chain; its full sequence is Aconitate hydratase A (906 aa).

[4Fe-4S] cluster-binding residues include Cys443, Cys509, and Cys512.

The protein belongs to the aconitase/IPM isomerase family. In terms of assembly, monomer. The cofactor is [4Fe-4S] cluster.

It catalyses the reaction citrate = D-threo-isocitrate. It carries out the reaction (2S,3R)-3-hydroxybutane-1,2,3-tricarboxylate = 2-methyl-cis-aconitate + H2O. Its pathway is carbohydrate metabolism; tricarboxylic acid cycle; isocitrate from oxaloacetate: step 2/2. It participates in organic acid metabolism; propanoate degradation. In terms of biological role, involved in the catabolism of short chain fatty acids (SCFA) via the tricarboxylic acid (TCA)(acetyl degradation route) and probably via the 2-methylcitrate cycle I (propionate degradation route). Catalyzes the reversible isomerization of citrate to isocitrate via cis-aconitate. Could catalyze the hydration of 2-methyl-cis-aconitate to yield (2R,3S)-2-methylisocitrate. The apo form of AcnA functions as a RNA-binding regulatory protein. This is Aconitate hydratase A from Bradyrhizobium diazoefficiens (strain JCM 10833 / BCRC 13528 / IAM 13628 / NBRC 14792 / USDA 110).